The following is a 186-amino-acid chain: ATP synthase subunit delta (186 aa).

It belongs to the ATPase delta chain family. As to quaternary structure, F-type ATPases have 2 components, F(1) - the catalytic core - and F(0) - the membrane proton channel. F(1) has five subunits: alpha(3), beta(3), gamma(1), delta(1), epsilon(1). CF(0) has four main subunits: a(1), b(1), b'(1) and c(10-14). The alpha and beta chains form an alternating ring which encloses part of the gamma chain. F(1) is attached to F(0) by a central stalk formed by the gamma and epsilon chains, while a peripheral stalk is formed by the delta, b and b' chains.

The protein resides in the cell inner membrane. Its function is as follows. F(1)F(0) ATP synthase produces ATP from ADP in the presence of a proton or sodium gradient. F-type ATPases consist of two structural domains, F(1) containing the extramembraneous catalytic core and F(0) containing the membrane proton channel, linked together by a central stalk and a peripheral stalk. During catalysis, ATP synthesis in the catalytic domain of F(1) is coupled via a rotary mechanism of the central stalk subunits to proton translocation. This protein is part of the stalk that links CF(0) to CF(1). It either transmits conformational changes from CF(0) to CF(1) or is implicated in proton conduction. The sequence is that of ATP synthase subunit delta from Rhodospirillum centenum (strain ATCC 51521 / SW).